The following is a 407-amino-acid chain: Argininosuccinate synthase (407 aa).

ATP-binding positions include 11-19 (AYSGGLDTS) and alanine 39. L-citrulline-binding residues include tyrosine 90 and serine 95. Glycine 120 contributes to the ATP binding site. Residues threonine 122, asparagine 126, and aspartate 127 each coordinate L-aspartate. Asparagine 126 is an L-citrulline binding site. Positions 130, 179, 188, 264, and 276 each coordinate L-citrulline.

It belongs to the argininosuccinate synthase family. Type 1 subfamily. In terms of assembly, homotetramer.

It localises to the cytoplasm. It catalyses the reaction L-citrulline + L-aspartate + ATP = 2-(N(omega)-L-arginino)succinate + AMP + diphosphate + H(+). It participates in amino-acid biosynthesis; L-arginine biosynthesis; L-arginine from L-ornithine and carbamoyl phosphate: step 2/3. The chain is Argininosuccinate synthase from Roseiflexus sp. (strain RS-1).